A 1028-amino-acid chain; its full sequence is Formate dehydrogenase major subunit (1028 aa).

Positions 1 to 33 (MQVSRRKFFKICAGGMAGTSAAMLGFAPANVLA) form a signal peptide, tat-type signal. In terms of domain architecture, 4Fe-4S Mo/W bis-MGD-type spans 43–114 (AFESRNTCTY…GSLDYVNSES (72 aa)). Cys-50, Cys-53, Cys-57, and Cys-100 together coordinate [4Fe-4S] cluster. A non-standard amino acid (selenocysteine) is located at residue Sec-204.

This sequence belongs to the prokaryotic molybdopterin-containing oxidoreductase family. As to quaternary structure, formate dehydrogenase is a membrane-bound complex, formed by subunits alpha, beta and gamma. It depends on Mo-bis(molybdopterin guanine dinucleotide) as a cofactor. The cofactor is [4Fe-4S] cluster. In terms of processing, predicted to be exported by the Tat system. The position of the signal peptide cleavage has not been experimentally proven.

Its subcellular location is the periplasm. The catalysed reaction is formate + NAD(+) = CO2 + NADH. Its function is as follows. Allows to use formate as major electron donor during anaerobic respiration. Subunit alpha possibly forms the active site. This is Formate dehydrogenase major subunit (fdxG) from Haemophilus influenzae (strain ATCC 51907 / DSM 11121 / KW20 / Rd).